We begin with the raw amino-acid sequence, 437 residues long: Na(+)/H(+) antiporter NhaA (437 aa).

11 helical membrane passes run 12 to 32 (SMNI…AVIA), 65 to 85 (LTMI…MVGL), 103 to 123 (ALPF…YSMV), 133 to 153 (GLAI…SLLG), 162 to 182 (IFLT…IAIF), 186 to 206 (HVAY…YFIG), 214 to 234 (IFFL…GIHS), 308 to 328 (GAVN…VMFS), 333 to 353 (VIGG…FLGI), 377 to 397 (ISGV…IANL), and 412 to 432 (LGVL…LHWV).

This sequence belongs to the NhaA Na(+)/H(+) (TC 2.A.33) antiporter family.

Its subcellular location is the cell inner membrane. The enzyme catalyses Na(+)(in) + 2 H(+)(out) = Na(+)(out) + 2 H(+)(in). In terms of biological role, na(+)/H(+) antiporter that extrudes sodium in exchange for external protons. In Bacteroides fragilis (strain YCH46), this protein is Na(+)/H(+) antiporter NhaA.